Here is a 606-residue protein sequence, read N- to C-terminus: Phosphomethylpyrimidine synthase (606 aa).

Polar residues predominate over residues 1-13; that stretch reads MTTADARTPASKQ. Disordered stretches follow at residues 1-49 and 105-147; these read MTTA…SRPD and AGRP…DGRP. Over residues 14–31 the composition is skewed to low complexity; that stretch reads NDGTPDGTTPDAGTPNDG. Positions 105–117 are enriched in basic and acidic residues; the sequence is AGRPVRPEDDGLK. Residues N213, M242, Y271, H307, 327–329, 368–371, and E407 each bind substrate; these read SRG and DGLR. Zn(2+) is bound at residue H411. Y434 contacts substrate. H475 provides a ligand contact to Zn(2+). 3 residues coordinate [4Fe-4S] cluster: C555, C558, and C563.

This sequence belongs to the ThiC family. The cofactor is [4Fe-4S] cluster.

It catalyses the reaction 5-amino-1-(5-phospho-beta-D-ribosyl)imidazole + S-adenosyl-L-methionine = 4-amino-2-methyl-5-(phosphooxymethyl)pyrimidine + CO + 5'-deoxyadenosine + formate + L-methionine + 3 H(+). It participates in cofactor biosynthesis; thiamine diphosphate biosynthesis. Catalyzes the synthesis of the hydroxymethylpyrimidine phosphate (HMP-P) moiety of thiamine from aminoimidazole ribotide (AIR) in a radical S-adenosyl-L-methionine (SAM)-dependent reaction. In Streptomyces griseus subsp. griseus (strain JCM 4626 / CBS 651.72 / NBRC 13350 / KCC S-0626 / ISP 5235), this protein is Phosphomethylpyrimidine synthase.